The chain runs to 174 residues: uncharacterized protein (174 aa).

This is an uncharacterized protein from Methanocaldococcus jannaschii (strain ATCC 43067 / DSM 2661 / JAL-1 / JCM 10045 / NBRC 100440) (Methanococcus jannaschii).